The primary structure comprises 465 residues: MENQEFLSSSAPSEVTDGQVSTEISTCSEVFQKPIVLRILDTHRELEESEDPEKHENPEEPEEVREQDQRDESEECDEPHESYEPHAPYAPHKPRDSYAPYELHGPHAAPKLLKAREPRQLRHTREPRKSREAKETELLPSAAVMISPSLITRAPPRPQLSFLGANPVSCDFVRKCFSSRKRTPNLSKPKKQWGTPDRKLFWGNQDPIRPVSQGALKAQLTKRLENLAQPKEVSCHYVPNRAQYYHSCGRESVIWEITPPALFRQPSKRIQRLSQPNGFKRQCLLNRPFSDNSARDSLRISDPSPRILQLSVAKGTDPNYHPSKKMQTKISLSTLSAIATPRIIELAHPRIKLEGLCYERQRSELPIRPVPPAAMIAKPSPRTIALAKSKSVHQDYLPDRDAHWPVSYATTHSKASPRIQELANPNKRAPVRIVYYDPDVFKTKPAALKAQCSQRIWELSQPLTR.

Residues 1 to 29 are compositionally biased toward polar residues; that stretch reads MENQEFLSSSAPSEVTDGQVSTEISTCSE. The disordered stretch occupies residues 1 to 140; sequence MENQEFLSSS…REAKETELLP (140 aa). Composition is skewed to basic and acidic residues over residues 40–70 and 114–137; these read LDTHRELEESEDPEKHENPEEPEEVREQDQR and KAREPRQLRHTREPRKSREAKETE. 8 THEG repeats span residues 174–192, 214–233, 260–279, 297–316, 333–352, 373–392, 409–428, and 446–465; these read RKCFSSRKRTPNLSKPKKQ, GALKAQLTKRLENLAQPKEV, PALFRQPSKRIQRLSQPNGF, SLRISDPSPRILQLSVAKGT, STLSAIATPRIIELAHPRIK, AAMIAKPSPRTIALAKSKSV, ATTHSKASPRIQELANPNKR, and AALKAQCSQRIWELSQPLTR.

The chain is Sperm microtubule associated protein 2-like from Homo sapiens (Human).